Consider the following 191-residue polypeptide: Potassium-transporting ATPase KdpC subunit (191 aa).

A helical transmembrane segment spans residues 10-30 (ITLVFCVFFSVFYILVLWLFA).

It belongs to the KdpC family. In terms of assembly, the system is composed of three essential subunits: KdpA, KdpB and KdpC.

It localises to the cell inner membrane. Its function is as follows. Part of the high-affinity ATP-driven potassium transport (or Kdp) system, which catalyzes the hydrolysis of ATP coupled with the electrogenic transport of potassium into the cytoplasm. This subunit acts as a catalytic chaperone that increases the ATP-binding affinity of the ATP-hydrolyzing subunit KdpB by the formation of a transient KdpB/KdpC/ATP ternary complex. In Bacteroides fragilis (strain ATCC 25285 / DSM 2151 / CCUG 4856 / JCM 11019 / LMG 10263 / NCTC 9343 / Onslow / VPI 2553 / EN-2), this protein is Potassium-transporting ATPase KdpC subunit.